A 301-amino-acid polypeptide reads, in one-letter code: Tyrosine recombinase XerC (301 aa).

Residues 1-89 (MGLDGLAAYL…SWRQYCVWLV (89 aa)) form the Core-binding (CB) domain. The 181-residue stretch at 110–290 (RVPKALPQEW…DFDHIARLYD (181 aa)) folds into the Tyr recombinase domain. Residues R151, K175, H242, R245, and H268 contribute to the active site. Y277 functions as the O-(3'-phospho-DNA)-tyrosine intermediate in the catalytic mechanism.

This sequence belongs to the 'phage' integrase family. XerC subfamily. In terms of assembly, forms a cyclic heterotetrameric complex composed of two molecules of XerC and two molecules of XerD.

The protein resides in the cytoplasm. Functionally, site-specific tyrosine recombinase, which acts by catalyzing the cutting and rejoining of the recombining DNA molecules. The XerC-XerD complex is essential to convert dimers of the bacterial chromosome into monomers to permit their segregation at cell division. It also contributes to the segregational stability of plasmids. The protein is Tyrosine recombinase XerC of Neisseria meningitidis serogroup B (strain ATCC BAA-335 / MC58).